A 269-amino-acid polypeptide reads, in one-letter code: Energy-coupling factor transporter ATP-binding protein EcfA1 (269 aa).

In terms of domain architecture, ABC transporter spans 8 to 242; that stretch reads ITFNHVRFKY…GDGLTEIGLD (235 aa). 42 to 49 serves as a coordination point for ATP; the sequence is GHNGSGKS.

The protein belongs to the ABC transporter superfamily. Energy-coupling factor EcfA family. Forms a stable energy-coupling factor (ECF) transporter complex composed of 2 membrane-embedded substrate-binding proteins (S component), 2 ATP-binding proteins (A component) and 2 transmembrane proteins (T component).

Its subcellular location is the cell membrane. In terms of biological role, ATP-binding (A) component of a common energy-coupling factor (ECF) ABC-transporter complex. Unlike classic ABC transporters this ECF transporter provides the energy necessary to transport a number of different substrates. The polypeptide is Energy-coupling factor transporter ATP-binding protein EcfA1 (Staphylococcus saprophyticus subsp. saprophyticus (strain ATCC 15305 / DSM 20229 / NCIMB 8711 / NCTC 7292 / S-41)).